The primary structure comprises 421 residues: Core-capsid bridging protein (421 aa).

Belongs to the adenoviridae core-capsid bridging protein family. In terms of assembly, monomer. Homodimer. Exists in equilibrium between monomers and dimers in solution. Interacts with the histone-like nucleoprotein; this interactions bridge the virus core to the capsid. Interacts with core protein X; this interactions bridge the virus core to the capsid. Interacts with the endosome lysis protein VI; this interactions bridge the virus core to the capsid. Interacts with the peripentonal hexons. Interacts with host NPM1; this interaction might play a role in virus assembly.

Its subcellular location is the virion. It localises to the host nucleus. The protein localises to the host nucleolus. Its function is as follows. Associates loosely with the viral DNA to form an outer shell around the nucleoprotein-DNA complex and links it with the capsid by binding the endosome lysis protein. Dissociates from the viral genome during entry. Might be involved in nuclear capsid assembly of the viral particles through its association with NPM1/nucleophosmin. This chain is Core-capsid bridging protein, found in Canine adenovirus serotype 1 (strain CLL) (CAdV-1).